Consider the following 859-residue polypeptide: DNA mismatch repair protein MutS (859 aa).

Gly-618 to Ser-625 serves as a coordination point for ATP. Positions Arg-803 to Pro-829 are disordered. Positions Gln-808–Asn-819 are enriched in low complexity.

This sequence belongs to the DNA mismatch repair MutS family.

In terms of biological role, this protein is involved in the repair of mismatches in DNA. It is possible that it carries out the mismatch recognition step. This protein has a weak ATPase activity. The polypeptide is DNA mismatch repair protein MutS (Shewanella pealeana (strain ATCC 700345 / ANG-SQ1)).